The following is a 511-amino-acid chain: MATDIDMLIDLGLDLSDSDLDEDPPEPAESRRDDLESDSSGECSSSDEDMEDPHGEDGPEPILDAARPAVRPSRPEDPGVPSTQTPRPTERQGPNDPQPAPHSVWSRLGARRPSCSPEQHGGKVARLQPPPTKAQPARGGRRGRRRGRGRGGPGAADGLSDPRRRAPRTNRNPGDRPGAGWTDGPGAPHGEAWRGSEQPDPPGGPRTRGVRQAPPPLMTLAIAPPPADPRAPAPERKAPAADTIDATTRLVLRSISERAAVDRISESFGRSAQVMPDPFGGQPFPAANSPWAPVLAGQGGPFDAETRRVSWETLVAHGPSLYRTFAGNPRAASTAKAMRDCVLRQENFIEALASADETLAWCKMCIHHNLPLRPQDPIIGTTAAVLDNLATRLRPFLQCYLKARGLCGLDELCSRRRLADIKDIASFVFVILARLANRVERGVAEIDYATLGVGVGEKMHFYLPGACMAGLIEILDTHRQECSSRVCELTASHIVAPPYVHGKYFYCNSLF.

Residues 1 to 15 (MATDIDMLIDLGLDL) show a composition bias toward low complexity. The tract at residues 1–244 (MATDIDMLID…ERKAPAADTI (244 aa)) is disordered. The Nuclear export signal signature appears at 5-17 (IDMLIDLGLDLSD). Phosphoserine; by host is present on residues S16 and S18. Composition is skewed to acidic residues over residues 16-26 (SDSDLDEDPPE) and 35-51 (LESD…EDME). The tract at residues 104-112 (VWSRLGARR) is interaction with host ALYREF. The Nuclear localization signal motif lies at 110-138 (ARRPSCSPEQHGGKVARLQPPPTKAQPAR). At S114 the chain carries Phosphoserine; by host. Residue R138 is modified to Dimethylated arginine; by host. An RGG-box region spans residues 138–152 (RGGRRGRRRGRGRGG). Residues 139-149 (GGRRGRRRGRG) are compositionally biased toward basic residues. Position 148 is an omega-N-methylarginine; by host (R148). R150 carries the dimethylated arginine; by host modification. The segment covering 213–232 (APPPLMTLAIAPPPADPRAP) has biased composition (pro residues). 4 residues coordinate Zn(2+): C399, H478, C482, and C487. The segment at 399–487 (CYLKARGLCG…HRQECSSRVC (89 aa)) adopts a CHC2-type zinc-finger fold.

The protein belongs to the HHV-1 ICP27 protein family. As to quaternary structure, interacts with host RBP1; this interaction facilitates the RNA polymerase recruitment to viral transcription sites. Interacts (via the RGG box) with host ALYREF/THOC4; this interaction recruits ALYREF to viral replication compartments and probably directs viral mRNA to the TAP/NFX1 pathway. Interacts (via the RGG box) with host SRPK1; this interaction relocalizes SRPK1 to the nucleus and seems to alter its activity. Interacts with ICP4; this interaction modulates ICP4 DNA-binding activity. Interacts with host NXF1; this interaction allows efficient export of HSV-1 early and late transcripts. Post-translationally, methylated within the RGG box possibly by host PRMT1. When hypomethylated, ICP27 is exported to the cytoplasm earlier and more rapidly. In terms of processing, phosphorylated.

It is found in the host cytoplasm. It localises to the host nucleus. Multifunctional regulator of the expression of viral genes that contributes to the shutoff of host protein synthesis and mediates nuclear export of viral intronless mRNAs. Early in infection, this immediate early (EI) protein mediates the inhibition of cellular splicing. This results in the accumulation of unprocessed 3'end pre-mRNAs which can't be exported from the nucleus. Cellular protein synthesis is thereby shut off early after virus infection. Later in the infection, it helps recruit cellular RNA polymerase II to viral replication sites and promotes the nuclear export of viral intronless mRNAs by interacting with mRNAs and host NXF1/TAP. ICP27 binds to NUP62 which may provide facilitated viral mRNA export and may compete with some host cell transport receptors for binding and inhibit cellular nucleocytoplasmic transport pathways. Also stimulates translation of viral transcripts. Repression of host gene expression blocks the cell cycle at the G1 phase and prevents apoptosis. Seems to silence the 3' splice site of the promyelocytic leukemia (PML) intron 7a, thereby switching PML isoforms from PML-II to PML-V. This could be linked to the accelerated mRNA export induced by ICP27 which might not provide sufficient time for PML pre-mRNA to be spliced in the nucleus. The protein is mRNA export factor of Human herpesvirus 1 (strain HFEM) (HHV-1).